The sequence spans 311 residues: Aspartate carbamoyltransferase catalytic subunit (311 aa).

Arg-55 and Thr-56 together coordinate carbamoyl phosphate. Position 85 (Lys-85) interacts with L-aspartate. The carbamoyl phosphate site is built by Arg-106, His-135, and Gln-138. Residues Arg-168 and Arg-230 each contribute to the L-aspartate site. Carbamoyl phosphate-binding residues include Leu-268 and Pro-269.

Belongs to the aspartate/ornithine carbamoyltransferase superfamily. ATCase family. In terms of assembly, heterododecamer (2C3:3R2) of six catalytic PyrB chains organized as two trimers (C3), and six regulatory PyrI chains organized as three dimers (R2).

The enzyme catalyses carbamoyl phosphate + L-aspartate = N-carbamoyl-L-aspartate + phosphate + H(+). Its pathway is pyrimidine metabolism; UMP biosynthesis via de novo pathway; (S)-dihydroorotate from bicarbonate: step 2/3. Its function is as follows. Catalyzes the condensation of carbamoyl phosphate and aspartate to form carbamoyl aspartate and inorganic phosphate, the committed step in the de novo pyrimidine nucleotide biosynthesis pathway. This is Aspartate carbamoyltransferase catalytic subunit from Cronobacter sakazakii (strain ATCC BAA-894) (Enterobacter sakazakii).